The sequence spans 296 residues: Ribosomal RNA small subunit methyltransferase A (296 aa).

Positions 32, 34, 59, 80, 105, and 130 each coordinate S-adenosyl-L-methionine.

It belongs to the class I-like SAM-binding methyltransferase superfamily. rRNA adenine N(6)-methyltransferase family. RsmA subfamily.

The protein resides in the cytoplasm. The catalysed reaction is adenosine(1518)/adenosine(1519) in 16S rRNA + 4 S-adenosyl-L-methionine = N(6)-dimethyladenosine(1518)/N(6)-dimethyladenosine(1519) in 16S rRNA + 4 S-adenosyl-L-homocysteine + 4 H(+). Functionally, specifically dimethylates two adjacent adenosines (A1518 and A1519) in the loop of a conserved hairpin near the 3'-end of 16S rRNA in the 30S particle. May play a critical role in biogenesis of 30S subunits. This Ligilactobacillus salivarius (strain UCC118) (Lactobacillus salivarius) protein is Ribosomal RNA small subunit methyltransferase A.